The sequence spans 66 residues: Large ribosomal subunit protein bL31 (66 aa).

The Zn(2+) site is built by Cys-16, Cys-18, Cys-36, and Cys-39.

Belongs to the bacterial ribosomal protein bL31 family. Type A subfamily. In terms of assembly, part of the 50S ribosomal subunit. Zn(2+) is required as a cofactor.

In terms of biological role, binds the 23S rRNA. The sequence is that of Large ribosomal subunit protein bL31 from Campylobacter fetus subsp. fetus (strain 82-40).